The primary structure comprises 309 residues: Coproporphyrin III ferrochelatase (309 aa).

Fe-coproporphyrin III-binding positions include Y12, T14, R29, 45-46 (RY), S53, and Y124. H182 and E263 together coordinate Fe(2+).

It belongs to the ferrochelatase family. In terms of assembly, monomer.

It localises to the cytoplasm. The catalysed reaction is Fe-coproporphyrin III + 2 H(+) = coproporphyrin III + Fe(2+). The protein operates within porphyrin-containing compound metabolism; protoheme biosynthesis. In terms of biological role, involved in coproporphyrin-dependent heme b biosynthesis. Catalyzes the insertion of ferrous iron into coproporphyrin III to form Fe-coproporphyrin III. The chain is Coproporphyrin III ferrochelatase from Listeria monocytogenes serovar 1/2a (strain ATCC BAA-679 / EGD-e).